The following is a 635-amino-acid chain: Extracellular metalloproteinase MEP (635 aa).

A signal peptide spans 1–19 (MRAFLLASLASLPAVNVYA). A propeptide spanning residues 20–244 (HPTHNSRGLT…VHAVVDYAAE (225 aa)) is cleaved from the precursor. N-linked (GlcNAc...) asparagine glycans are attached at residues Asn287, Asn302, and Asn336. His429 contributes to the Zn(2+) binding site. The active site involves Glu430. His433 lines the Zn(2+) pocket.

The protein belongs to the peptidase M36 family. Zn(2+) serves as cofactor.

The protein resides in the secreted. Secreted metalloproteinase that allows assimilation of proteinaceous substrates. The sequence is that of Extracellular metalloproteinase MEP (MEP) from Leptosphaeria maculans (strain JN3 / isolate v23.1.3 / race Av1-4-5-6-7-8) (Blackleg fungus).